The primary structure comprises 118 residues: GRB2-related adapter protein-like (118 aa).

The region spanning 1–58 (MESVALYSFQATESDELAFNKGDTLKILNMEDDQNWYKAELRGVEGFIPKNYIRVKPH) is the SH3 domain. In terms of domain architecture, SH2 spans 60–118 (WYSGRISRQLAEEILMKRNHLGAFLIRESESSPGEFSVSVNNRAQRGPCLGPKSHSRLG). The segment at 89–118 (ESSPGEFSVSVNNRAQRGPCLGPKSHSRLG) is disordered. Polar residues predominate over residues 90–103 (SSPGEFSVSVNNRA).

The protein belongs to the GRB2/sem-5/DRK family.

The sequence is that of GRB2-related adapter protein-like (GRAPL) from Homo sapiens (Human).